We begin with the raw amino-acid sequence, 71 residues long: Conotoxin PnMEKL-032 (71 aa).

The first 19 residues, 1–19, serve as a signal peptide directing secretion; sequence MQKLIILLLVAAVLMSTQA. The propeptide occupies 20-46; that stretch reads LFQEKRLKEKINFLSKEKADAEKQQKR. Disulfide bonds link cysteine 48-cysteine 62, cysteine 55-cysteine 66, and cysteine 61-cysteine 70.

The protein belongs to the conotoxin O2 superfamily. As to expression, expressed by the venom duct.

The protein localises to the secreted. This is Conotoxin PnMEKL-032 from Conus pennaceus (Feathered cone).